Consider the following 188-residue polypeptide: Quinone reductase (188 aa).

Residues 13 to 20, 82 to 85, and Ser117 each bind FMN; these read SLRKGSFN and EYNY.

The protein belongs to the SsuE family. Homotetramer. Dimer of dimers. The tetrameric configuration has a central role in chromate reductase activity. Requires FMN as cofactor.

It catalyses the reaction a quinone + NADH + H(+) = a quinol + NAD(+). It carries out the reaction a quinone + NADPH + H(+) = a quinol + NADP(+). The catalysed reaction is Cr(6+) + 2 NADH + O2 = Cr(3+) + superoxide + 2 NAD(+) + 2 H(+). The enzyme catalyses Cr(6+) + 2 NADPH + O2 = Cr(3+) + superoxide + 2 NADP(+) + 2 H(+). Its function is as follows. Catalyzes the reduction of quinones. Acts by simultaneous two-electron transfer, avoiding formation of highly reactive semiquinone intermediates and producing quinols that promote tolerance of H(2)O(2). Quinone reduction is probably the primary biological role of ChrR. Can also reduce toxic chromate to insoluble and less toxic Cr(3+). Catalyzes the transfer of three electrons to Cr(6+) producing Cr(3+) and one electron to molecular oxygen without producing the toxic Cr(5+) species and only producing a minimal amount of reactive oxygen species (ROS). Chromate reduction protects the cell against chromate toxicity, but is likely a secondary activity. This is Quinone reductase (chrR) from Escherichia coli O157:H7.